The chain runs to 611 residues: MFS siderochrome iron transporter C (611 aa).

The segment at 1–25 is disordered; sequence MPFLDHRTGPSYGTIDQMEQHSDDE. N-linked (GlcNAc...) asparagine glycosylation is present at Asn62. 14 helical membrane passes run 71 to 91, 107 to 127, 136 to 156, 165 to 185, 194 to 214, 228 to 248, 282 to 302, 313 to 333, 353 to 373, 393 to 413, 418 to 438, 449 to 469, 486 to 506, and 560 to 580; these read VIAY…GQTV, LIST…PPMA, FEAF…MAAS, AQIF…VFIA, AFLA…GPTI, YGMW…SLLL, MGGL…LTLA, SIVA…FWES, ALAG…SVQP, VTQT…ILIK, YRAF…LMMV, ILVT…PVQL, MFLT…GAVW, and LLIL…AMED. Positions 592 to 611 are disordered; the sequence is VDPVPAEEGEIEPNRHVKRT.

The protein belongs to the major facilitator superfamily.

The protein localises to the membrane. Its function is as follows. Major facilitator transporter that contributes to the maintenance of intracellular siderophore ferricrocin (FC) levels. Plays a role in conidiation and confers protection against oxidative stress. Also contributes to fungal virulence in the Galleria mellonella animal model system. Does not appear to play a role in either siderophore export or uptake. This is MFS siderochrome iron transporter C from Aspergillus fumigatus (strain ATCC MYA-4609 / CBS 101355 / FGSC A1100 / Af293) (Neosartorya fumigata).